Here is an 81-residue protein sequence, read N- to C-terminus: MAHSVKIYDTCIGCTQCVRACPTDVLEMVPWNGCRAKQIASAPRTEDCVGCKRCESACPTDYLSVRVYLRNETTRSMGLAY.

4Fe-4S ferredoxin-type domains are found at residues 2 to 31 and 39 to 68; these read AHSV…MVPW and IASA…VRVY. 8 residues coordinate [4Fe-4S] cluster: Cys11, Cys14, Cys17, Cys21, Cys48, Cys51, Cys54, and Cys58.

In terms of assembly, the eukaryotic PSI reaction center is composed of at least 11 subunits. [4Fe-4S] cluster serves as cofactor.

The protein resides in the plastid. It is found in the chloroplast thylakoid membrane. The catalysed reaction is reduced [plastocyanin] + hnu + oxidized [2Fe-2S]-[ferredoxin] = oxidized [plastocyanin] + reduced [2Fe-2S]-[ferredoxin]. Its function is as follows. Apoprotein for the two 4Fe-4S centers FA and FB of photosystem I (PSI); essential for photochemical activity. FB is the terminal electron acceptor of PSI, donating electrons to ferredoxin. The C-terminus interacts with PsaA/B/D and helps assemble the protein into the PSI complex. Required for binding of PsaD and PsaE to PSI. PSI is a plastocyanin-ferredoxin oxidoreductase, converting photonic excitation into a charge separation, which transfers an electron from the donor P700 chlorophyll pair to the spectroscopically characterized acceptors A0, A1, FX, FA and FB in turn. This is Photosystem I iron-sulfur center from Gnetum parvifolium (Small-leaved jointfir).